The primary structure comprises 359 residues: Phospho-N-acetylmuramoyl-pentapeptide-transferase (359 aa).

The next 10 membrane-spanning stretches (helical) occupy residues 3-23 (QILF…PVLI), 53-73 (GGVA…LIGI), 84-104 (GLLV…DDFI), 117-137 (TAKL…ALQF), 156-176 (IATV…LVSA), 187-207 (LDGL…IITF), 231-251 (LALI…WNAA), 255-275 (IFMG…LSIT), 283-303 (VVIG…VAVF), and 330-350 (VIIR…ALFY).

This sequence belongs to the glycosyltransferase 4 family. MraY subfamily. It depends on Mg(2+) as a cofactor.

It is found in the cell membrane. It carries out the reaction UDP-N-acetyl-alpha-D-muramoyl-L-alanyl-gamma-D-glutamyl-meso-2,6-diaminopimeloyl-D-alanyl-D-alanine + di-trans,octa-cis-undecaprenyl phosphate = di-trans,octa-cis-undecaprenyl diphospho-N-acetyl-alpha-D-muramoyl-L-alanyl-D-glutamyl-meso-2,6-diaminopimeloyl-D-alanyl-D-alanine + UMP. It participates in cell wall biogenesis; peptidoglycan biosynthesis. Functionally, catalyzes the initial step of the lipid cycle reactions in the biosynthesis of the cell wall peptidoglycan: transfers peptidoglycan precursor phospho-MurNAc-pentapeptide from UDP-MurNAc-pentapeptide onto the lipid carrier undecaprenyl phosphate, yielding undecaprenyl-pyrophosphoryl-MurNAc-pentapeptide, known as lipid I. This is Phospho-N-acetylmuramoyl-pentapeptide-transferase from Rhodococcus jostii (strain RHA1).